The chain runs to 119 residues: uncharacterized protein (119 aa).

The N-terminal stretch at 1–26 (MNKLKRLSMLTVMIASVFIFSSHALA) is a signal peptide. Residues 30 to 104 (YTVSTSSGAP…IVPGFVSDTY (75 aa)) form the SH3b domain.

To B.subtilis YraJ.

This is an uncharacterized protein from Bacillus subtilis (strain 168).